A 481-amino-acid polypeptide reads, in one-letter code: Delta 4,5-hexuronate-2-O-sulfatase (481 aa).

The residue at position 64 (Ser-64) is a 3-oxoalanine (Ser). Zn(2+)-binding residues include Cys-225, Cys-226, His-462, and His-469. Positions 453-481 (VDADPRCRNHTPGYPSHEGPGAREILKRK) are disordered. Residues 472–481 (PGAREILKRK) are compositionally biased toward basic and acidic residues.

It belongs to the sulfatase family. The cofactor is Zn(2+). In terms of processing, the conversion to 3-oxoalanine (also known as C-formylglycine, FGly), of a serine or cysteine residue in prokaryotes and of a cysteine residue in eukaryotes, is critical for catalytic activity.

Functionally, exosulfatase involved in the degradation of the glycosaminoglycans (GAGs) chondroitin sulfate (CS), dermatan sulfate (DS) and heparan sulfate (HS). 2-O-sulfatase active on unsaturated non-reducing end hexuronate units. Has a slight preference for HS-derived structures. GAG-specific sulfatases play a key role in the persistence of the major human gut symbiont B.thetaiotaomicron in the host gastrointestinal tract. This Bacteroides thetaiotaomicron (strain ATCC 29148 / DSM 2079 / JCM 5827 / CCUG 10774 / NCTC 10582 / VPI-5482 / E50) protein is Delta 4,5-hexuronate-2-O-sulfatase.